The sequence spans 532 residues: CTP synthase (532 aa).

An amidoligase domain region spans residues 1–267 (MTKFIFVTGG…DDIVLKILGL (267 aa)). Serine 13 lines the CTP pocket. Residue serine 13 participates in UTP binding. 14 to 19 (SLGKGI) is a binding site for ATP. Residue tyrosine 54 participates in L-glutamine binding. An ATP-binding site is contributed by aspartate 71. The Mg(2+) site is built by aspartate 71 and glutamate 141. CTP contacts are provided by residues 148-150 (DIE), 188-193 (KTKPTQ), and lysine 224. Residues 188–193 (KTKPTQ) and lysine 224 each bind UTP. One can recognise a Glutamine amidotransferase type-1 domain in the interval 292 to 532 (EIAIVGKYVE…EFVKATLANR (241 aa)). Glycine 354 serves as a coordination point for L-glutamine. Cysteine 381 serves as the catalytic Nucleophile; for glutamine hydrolysis. L-glutamine-binding positions include 382-385 (LGMQ), glutamate 405, and arginine 462. Catalysis depends on residues histidine 507 and glutamate 509.

It belongs to the CTP synthase family. As to quaternary structure, homotetramer.

It catalyses the reaction UTP + L-glutamine + ATP + H2O = CTP + L-glutamate + ADP + phosphate + 2 H(+). It carries out the reaction L-glutamine + H2O = L-glutamate + NH4(+). The enzyme catalyses UTP + NH4(+) + ATP = CTP + ADP + phosphate + 2 H(+). It participates in pyrimidine metabolism; CTP biosynthesis via de novo pathway; CTP from UDP: step 2/2. Its activity is regulated as follows. Allosterically activated by GTP, when glutamine is the substrate; GTP has no effect on the reaction when ammonia is the substrate. The allosteric effector GTP functions by stabilizing the protein conformation that binds the tetrahedral intermediate(s) formed during glutamine hydrolysis. Inhibited by the product CTP, via allosteric rather than competitive inhibition. Its function is as follows. Catalyzes the ATP-dependent amination of UTP to CTP with either L-glutamine or ammonia as the source of nitrogen. Regulates intracellular CTP levels through interactions with the four ribonucleotide triphosphates. This chain is CTP synthase, found in Desulfitobacterium hafniense (strain Y51).